The chain runs to 273 residues: MTDRYAVFGNPISHSKSPLIHGIFANETQQVLDYEAILAPKDGFESCLKLFWSQNGKGANVTAPFKEQAFNLCDELSEEAKLAGAVNTLTLLTNGKVRGDNTDGLGLVADLIRNISSLEGKRVLLLGAGGAARGSVLPLLKAGLKVYIHNRTQEKAEKLVEIFTPFGDVKALSIAELIAPFDIIINSTSSSLSGDVPAIPSCVIGVESLCYDMMYSKEMTSFNSWALELGAVKAIDGLGMLVGQAAKSFELWRGVTPEVDTTIKLLREKIKSE.

Shikimate is bound by residues 15–17 (SKS) and Thr62. Catalysis depends on Lys66, which acts as the Proton acceptor. Glu78 lines the NADP(+) pocket. Asn87 and Asp103 together coordinate shikimate. NADP(+) is bound by residues 127-131 (GAGGA), 150-155 (NRTQEK), and Met213. Tyr215 contacts shikimate. Gly237 is an NADP(+) binding site.

Belongs to the shikimate dehydrogenase family. In terms of assembly, homodimer.

The catalysed reaction is shikimate + NADP(+) = 3-dehydroshikimate + NADPH + H(+). It participates in metabolic intermediate biosynthesis; chorismate biosynthesis; chorismate from D-erythrose 4-phosphate and phosphoenolpyruvate: step 4/7. In terms of biological role, involved in the biosynthesis of the chorismate, which leads to the biosynthesis of aromatic amino acids. Catalyzes the reversible NADPH linked reduction of 3-dehydroshikimate (DHSA) to yield shikimate (SA). The polypeptide is Shikimate dehydrogenase (NADP(+)) (Shewanella woodyi (strain ATCC 51908 / MS32)).